The sequence spans 155 residues: Ribosome maturation factor RimP (155 aa).

The protein belongs to the RimP family.

It localises to the cytoplasm. Functionally, required for maturation of 30S ribosomal subunits. The protein is Ribosome maturation factor RimP of Desulforapulum autotrophicum (strain ATCC 43914 / DSM 3382 / VKM B-1955 / HRM2) (Desulfobacterium autotrophicum).